Consider the following 603-residue polypeptide: MGRKWTYCVVYAIIQIQFFRGAWEELFNAGDNNVYALPGSDVNLTCQTMEKDLMVQMQWSKVTDEIDMIVVYHPQYGFHYMQGVACESRVAAVETLKDATKWTLNLRNISSSLSGKYECSFTMYPTGTKTIVYNLIVEPYTQDEHNRTIEIETNRTLEIPCFQNTSSEISPRFTFSWLVEKDGVEDVLFTYDYHVSNSTAFKGRVGLGADYGLRLSPVQIQDDGRTFSCFLRISPLKVWKTSTTVKVFAKPEILMTVENTTMDVLGERVFTCLLKNVFPKASITWLIDGRLFQGNEEGIYITNEEKNSSSGFWELKSVLTRMHNRTSQSNNMTVWCMALSPGPGNKMWNTSSQPITFSLDSGTAPTKRLPNVTGSTLGAQTFPDAEVSPTRYLATSSMTIVDENVLTPDPTPQTSNSSMTTKDVNYSQPSSGTDAKNSSRAASSSDGGSRPFPSTSPPKWLSLPHTSTGPQEPDSAVSWIPTDAYTSGSSDASLTSHDVIIRTTKEFPDVLTTANGTTKIKHGHVTGITVNKPRDGMSWPVAVATLLFFCILLFGLGVRKWCQYQKEIMERPPPFKPPPPPIKYMCIQEPTGRGMPCHEMEVL.

The signal sequence occupies residues 1–21 (MGRKWTYCVVYAIIQIQFFRG). Residues 22–537 (AWEELFNAGD…ITVNKPRDGM (516 aa)) lie on the Extracellular side of the membrane. Ig-like V-type domains follow at residues 24 to 132 (EELF…KTIV) and 139 to 245 (PYTQ…STTV). Asn-43, Asn-108, Asn-146, Asn-154, Asn-164, Asn-197, Asn-259, Asn-307, Asn-324, Asn-331, Asn-349, Asn-371, Asn-416, Asn-425, and Asn-437 each carry an N-linked (GlcNAc...) asparagine glycan. A disulfide bond links Cys-46 and Cys-119. An intrachain disulfide couples Cys-161 to Cys-229. Positions 251–356 (PEILMTVENT…MWNTSSQPIT (106 aa)) constitute an Ig-like C2-type domain. An intrachain disulfide couples Cys-272 to Cys-336. Disordered stretches follow at residues 359–383 (LDSG…QTFP) and 403–482 (ENVL…WIPT). Positions 412–436 (PQTSNSSMTTKDVNYSQPSSGTDAK) are enriched in polar residues. Residues 438–450 (SSRAASSSDGGSR) show a composition bias toward low complexity. Residue Asn-515 is glycosylated (N-linked (GlcNAc...) asparagine). The chain crosses the membrane as a helical span at residues 538 to 558 (SWPVAVATLLFFCILLFGLGV). Residues 559–603 (RKWCQYQKEIMERPPPFKPPPPPIKYMCIQEPTGRGMPCHEMEVL) are Cytoplasmic-facing.

Homodimer; disulfide-linked. Interacts with PVR.

The protein resides in the membrane. Its function is as follows. May be involved in adhesive interactions of activated T and NK cells during the late phase of the immune response. Promotes NK cell-target adhesion by interacting with PVR present on target cells. May function at a time after T and NK cells have penetrated the endothelium using integrins and selectins, when they are actively engaging diseased cells and moving within areas of inflammation. This is T-cell surface protein tactile (Cd96) from Rattus norvegicus (Rat).